Reading from the N-terminus, the 423-residue chain is SH2 domain-containing protein 5 (423 aa).

One can recognise a PID domain in the interval 28 to 146; that stretch reads AQYVGLLPCG…LLCRSFQLAY (119 aa). One can recognise an SH2 domain in the interval 296-392; the sequence is WAFAGISRPC…LDMGRLNPTY (97 aa). The disordered stretch occupies residues 394–423; the sequence is EQDCGPLGRPPRTLRPLSHAKSEAELQGLG. Residues 398–410 are compositionally biased toward low complexity; that stretch reads GPLGRPPRTLRPL.

In terms of assembly, interacts with BCR.

The protein localises to the postsynaptic density. May be involved in synaptic plasticity regulation through the control of Rac-GTP levels. This chain is SH2 domain-containing protein 5, found in Pongo abelii (Sumatran orangutan).